We begin with the raw amino-acid sequence, 237 residues long: Peroxisomal membrane protein 11-1 (237 aa).

Topologically, residues 1–92 (MSTLDATRAE…TLVLLGKSKN (92 aa)) are cytoplasmic. Residues 93–113 (ALLSTFLFLDQFVWLGRTGIY) form a helical membrane-spanning segment. Topologically, residues 114–204 (KNKERTDRIV…VGLLQLSPKK (91 aa)) are lumenal. The chain crosses the membrane as a helical span at residues 205–223 (ITPRVTGAFGFVTSLISCY). Residues 224–237 (QQLPSRAPAIKVKA) lie on the Cytoplasmic side of the membrane.

This sequence belongs to the peroxin-11 family. In terms of tissue distribution, expressed in seedlings, leaf sheaths, flag leaf, panicles and spikelets.

Its subcellular location is the peroxisome membrane. Involved in peroxisomal proliferation. The sequence is that of Peroxisomal membrane protein 11-1 (PEX11-1) from Oryza sativa subsp. japonica (Rice).